The primary structure comprises 122 residues: Piercer of microtubule wall 2 protein (122 aa).

Residues M1 to P23 show a composition bias toward basic and acidic residues. 2 disordered regions span residues M1–P26 and Q99–L122. Positions I113–L122 are enriched in polar residues.

Belongs to the PIERCE2 family. Microtubule inner protein component of sperm flagellar doublet microtubules. Interacts with CFAP53, ODAD1 and ODAD3; the interactions link the outer dynein arms docking complex (ODA-DC) to the internal microtubule inner proteins (MIP) in cilium axoneme.

It localises to the cytoplasm. The protein localises to the cytoskeleton. Its subcellular location is the cilium axoneme. It is found in the flagellum axoneme. Microtubule inner protein involved in the attachment of outer dynein arms (ODAs) to dynein-decorated doublet microtubules (DMTs) in cilia axoneme, which is required for motile cilia beating. In Mus musculus (Mouse), this protein is Piercer of microtubule wall 2 protein.